Reading from the N-terminus, the 438-residue chain is Porin AaxA (438 aa).

Positions 1–21 are cleaved as a signal peptide; sequence MISFRFLLLSGLCALGISSYA.

It belongs to the OprB family.

It localises to the cell outer membrane. Functionally, facilitates L-arginine uptake, as part of the AaxABC system. The arginine uptake by the bacterium in the macrophage may be a virulence factor against the host innate immune response. This chain is Porin AaxA (aaxA), found in Chlamydia pneumoniae (Chlamydophila pneumoniae).